The primary structure comprises 327 residues: Tetraacyldisaccharide 4'-kinase (327 aa).

Residue 54 to 61 (TTGGTGKT) participates in ATP binding. The tract at residues 78 to 106 (PHILSRGHGGRERGPIGVNPNRSTPRDVG) is disordered.

This sequence belongs to the LpxK family.

The enzyme catalyses a lipid A disaccharide + ATP = a lipid IVA + ADP + H(+). It functions in the pathway glycolipid biosynthesis; lipid IV(A) biosynthesis; lipid IV(A) from (3R)-3-hydroxytetradecanoyl-[acyl-carrier-protein] and UDP-N-acetyl-alpha-D-glucosamine: step 6/6. Functionally, transfers the gamma-phosphate of ATP to the 4'-position of a tetraacyldisaccharide 1-phosphate intermediate (termed DS-1-P) to form tetraacyldisaccharide 1,4'-bis-phosphate (lipid IVA). The chain is Tetraacyldisaccharide 4'-kinase from Gluconobacter oxydans (strain 621H) (Gluconobacter suboxydans).